The following is a 950-amino-acid chain: Glycine dehydrogenase (decarboxylating) (950 aa).

N6-(pyridoxal phosphate)lysine is present on lysine 698.

Belongs to the GcvP family. In terms of assembly, the glycine cleavage system is composed of four proteins: P, T, L and H. The cofactor is pyridoxal 5'-phosphate.

The enzyme catalyses N(6)-[(R)-lipoyl]-L-lysyl-[glycine-cleavage complex H protein] + glycine + H(+) = N(6)-[(R)-S(8)-aminomethyldihydrolipoyl]-L-lysyl-[glycine-cleavage complex H protein] + CO2. In terms of biological role, the glycine cleavage system catalyzes the degradation of glycine. The P protein binds the alpha-amino group of glycine through its pyridoxal phosphate cofactor; CO(2) is released and the remaining methylamine moiety is then transferred to the lipoamide cofactor of the H protein. The chain is Glycine dehydrogenase (decarboxylating) from Neisseria meningitidis serogroup C (strain 053442).